Here is a 449-residue protein sequence, read N- to C-terminus: MSKEISFDTIEDFTSNLSKHPAYGVAANAAQTNGIFKASQSTQSKVDLDPTFSVEIDTGSVTNQKQSGRCWMFSALNTMRHSIQKEFKLKGFELSQSYTFFWDKFEKSNFFFENVIGSADKPLGDRKVSFLFATPQSDGGQWDMLCGLIEKYGIVPKKVYPETANSENSRALNDTLNTMLRKGGLELRALVNEGKSTEEVEAHKAELLDAIFRMLATSLGLPPKSFNFEYTDDDGNYHIDKDITPQDFFKKYVGWDLENYISVINGPTADKPYNKVFSVEYLGNVVGGRQVRHLNLELSKFKELIINQLKQGEVVWFGSDVSKGGDREAGLLDTKIYQRDQLFDYDFSMSKADRLDSGESMMNHAMVITAVDLVDDKPTKWKIENSWGDKSGFKGYFVMSDEWFDQFVYQAVLNKAFLPEDVKKAYDEGKENPIELLPWDPMGALAFDF.

Active-site residues include Cys-70, His-364, and Asn-385.

It belongs to the peptidase C1 family. As to quaternary structure, homohexamer.

It is found in the cytoplasm. The enzyme catalyses Inactivates bleomycin B2 (a cytotoxic glycometallopeptide) by hydrolysis of a carboxyamide bond of beta-aminoalanine, but also shows general aminopeptidase activity. The specificity varies somewhat with source, but amino acid arylamides of Met, Leu and Ala are preferred.. The sequence is that of Aminopeptidase C (pepC) from Lactobacillus delbrueckii subsp. lactis.